The sequence spans 228 residues: L-ribulose-5-phosphate 4-epimerase UlaF (228 aa).

Substrate contacts are provided by residues 26–27 (GN), 43–44 (SG), and 72–73 (SS). D74, H93, and H95 together coordinate Zn(2+). D118 (proton donor/acceptor) is an active-site residue. H167 serves as a coordination point for Zn(2+). Y225 serves as the catalytic Proton donor/acceptor.

Belongs to the aldolase class II family. AraD/FucA subfamily. It depends on Zn(2+) as a cofactor.

The catalysed reaction is L-ribulose 5-phosphate = D-xylulose 5-phosphate. The protein operates within cofactor degradation; L-ascorbate degradation; D-xylulose 5-phosphate from L-ascorbate: step 4/4. Its function is as follows. Catalyzes the isomerization of L-ribulose 5-phosphate to D-xylulose 5-phosphate. Is involved in the anaerobic L-ascorbate utilization. In Escherichia coli O139:H28 (strain E24377A / ETEC), this protein is L-ribulose-5-phosphate 4-epimerase UlaF.